We begin with the raw amino-acid sequence, 190 residues long: HTH-type transcriptional repressor AcnR (190 aa).

The 61-residue stretch at 10–70 (SMRRQEILEG…ALAREDAARM (61 aa)) folds into the HTH tetR-type domain. The H-T-H motif DNA-binding region spans 33–52 (TVRRLEETVGKSRGAIFHHF). Citrate contacts are provided by residues 79 to 80 (LV), Arg-130, and Asn-134. Glu-181 contacts Mg(2+). Arg-185 is a citrate binding site.

As to quaternary structure, homodimer.

AcnR negatively controls the expression of the aconitase gene acn. This chain is HTH-type transcriptional repressor AcnR, found in Corynebacterium diphtheriae (strain ATCC 700971 / NCTC 13129 / Biotype gravis).